The following is a 78-amino-acid chain: NAD(P)H-quinone oxidoreductase subunit L (78 aa).

2 helical membrane passes run 10–30 (IILI…PAIV) and 47–67 (VFMY…SPFL).

It belongs to the complex I NdhL subunit family. In terms of assembly, NDH-1 can be composed of about 15 different subunits; different subcomplexes with different compositions have been identified which probably have different functions.

It localises to the cellular thylakoid membrane. It catalyses the reaction a plastoquinone + NADH + (n+1) H(+)(in) = a plastoquinol + NAD(+) + n H(+)(out). It carries out the reaction a plastoquinone + NADPH + (n+1) H(+)(in) = a plastoquinol + NADP(+) + n H(+)(out). Functionally, NDH-1 shuttles electrons from an unknown electron donor, via FMN and iron-sulfur (Fe-S) centers, to quinones in the respiratory and/or the photosynthetic chain. The immediate electron acceptor for the enzyme in this species is believed to be plastoquinone. Couples the redox reaction to proton translocation, and thus conserves the redox energy in a proton gradient. Cyanobacterial NDH-1 also plays a role in inorganic carbon-concentration. In Trichodesmium erythraeum (strain IMS101), this protein is NAD(P)H-quinone oxidoreductase subunit L.